A 147-amino-acid polypeptide reads, in one-letter code: Large ribosomal subunit protein uL13 (147 aa).

This sequence belongs to the universal ribosomal protein uL13 family. Part of the 50S ribosomal subunit.

This protein is one of the early assembly proteins of the 50S ribosomal subunit, although it is not seen to bind rRNA by itself. It is important during the early stages of 50S assembly. The protein is Large ribosomal subunit protein uL13 of Mycobacterium leprae (strain Br4923).